A 62-amino-acid polypeptide reads, in one-letter code: Sperm protamine P1 (62 aa).

The tract at residues 1–62 is disordered; the sequence is MARYRHSRSR…RYSRRRRRRY (62 aa).

This sequence belongs to the protamine P1 family. In terms of tissue distribution, testis.

It is found in the nucleus. Its subcellular location is the chromosome. Protamines substitute for histones in the chromatin of sperm during the haploid phase of spermatogenesis. They compact sperm DNA into a highly condensed, stable and inactive complex. The sequence is that of Sperm protamine P1 (PRM1) from Lagostrophus fasciatus (Banded hare-wallaby).